The sequence spans 179 residues: GTP-dependent dephospho-CoA kinase (179 aa).

GTP-binding residues include Asp55, Val57, Asp74, Lys76, and Glu128.

Belongs to the GTP-dependent DPCK family.

It carries out the reaction 3'-dephospho-CoA + GTP = GDP + CoA + H(+). It functions in the pathway cofactor biosynthesis; coenzyme A biosynthesis. Its function is as follows. Catalyzes the GTP-dependent phosphorylation of the 3'-hydroxyl group of dephosphocoenzyme A to form coenzyme A (CoA). This Saccharolobus islandicus (strain M.16.4 / Kamchatka #3) (Sulfolobus islandicus) protein is GTP-dependent dephospho-CoA kinase.